Reading from the N-terminus, the 471-residue chain is DnaJ protein P58IPK homolog B (471 aa).

A signal peptide spans 1–24 (MARWPWRWRVLLPLLLLHSSPVFA). TPR repeat units lie at residues 32–65 (PSTL…DPNH), 66–99 (SEAY…KPGS), 112–146 (AQNA…SPNC), 148–180 (KAKL…DEDN), 181–214 (LDAL…DPEH), 227–260 (LLKK…DPDH), 265–298 (VHLY…DGEL), and 300–332 (DALT…SPQD). A glycan (N-linked (GlcNAc...) asparagine) is linked at Asn-64. The region spanning 353–419 (DWYKILGISK…DKRVRYDRGE (67 aa)) is the J domain.

Interacts with BIP1.

The protein resides in the endoplasmic reticulum lumen. Its function is as follows. May play a role in protein folding in the endoplasmic reticulum. The sequence is that of DnaJ protein P58IPK homolog B from Oryza sativa subsp. japonica (Rice).